A 92-amino-acid chain; its full sequence is UPF0213 protein H16_B0156 (92 aa).

The GIY-YIG domain maps to 5 to 80; sequence SAWYLYLLEC…KRLSSTQKRA (76 aa).

It belongs to the UPF0213 family.

This Cupriavidus necator (strain ATCC 17699 / DSM 428 / KCTC 22496 / NCIMB 10442 / H16 / Stanier 337) (Ralstonia eutropha) protein is UPF0213 protein H16_B0156.